The chain runs to 441 residues: 3'-N-debenzoyl-2'-deoxytaxol N-benzoyltransferase (441 aa).

Catalysis depends on proton acceptor residues His-163 and Asp-373.

Belongs to the plant acyltransferase family.

It catalyses the reaction 3'-N-debenzoyltaxol + benzoyl-CoA = paclitaxel + CoA + H(+). It participates in alkaloid biosynthesis; taxol biosynthesis. In terms of biological role, catalyzes the stereoselective coupling of the surrogate substrate N-debenzoyl-(3'RS)-2'-deoxytaxol with benzoyl-CoA to form predominantly one 3'-epimer of 2'-deoxytaxol. This enzymatic reaction constitutes the final acylation in the taxol biosynthetic pathway. The sequence is that of 3'-N-debenzoyl-2'-deoxytaxol N-benzoyltransferase from Taxus canadensis (Canadian yew).